Reading from the N-terminus, the 750-residue chain is MIIRPSEPEVKIAVDRDPVKTSFEEWARPGHFSRTIAKGPDTTTWIWNLHADAHDFDSHTGDLEEISRKVFSAHFGQLSIIFLWLSGMYFHGARFSNYEAWLSDPTHIGPSAQVVWPIVGQEILNGDVGGGFRGIQITSGFFQIWRASGITSELQLYCTAIGALIFASLMLFAGWFHYHKAAPKLAWFQDVESMLNHHLAGLLGLGSLSWAGHQIHVSLPINQFLDAGVDPKEIPLPHEFILNRDLLAQLYPSFAEGATPFFTLNWSKYAEFLSFRGGLDPITGGLWLSDIAHHHLAIAILFLIAGHMYRTNWGIGHGLKDILEAHKGPFTGQGHKGLYEILTTSWHAQLSLNLAMLGSTTIVVAHHMYSMPPYPYLATDYGTQLSLFTHHMWIGGFLIVGAAAHAAIFMVRDYDPTTRYNDLLDRVLRHRDAIISHLNWVCIFLGFHSFGLYIHNDTMSALGRPQDMFSDTAIQLQPIFAQWIQNIHAGAPGVTAPGATTSTSLTWGGGELVAVGGKVALLPIPLGTADFLVHHIHAFTIHVTVLILLKGVLFARSSRLIPDKANLGFRFPCDGPGRGGTCQVSAWDHVFLGLFWMYNSISVVIFHFSWKMQSDVWGTISDQGIVTHITGGNFAQSSITINGWLRDFLWAQASQVIQSYGSSLSAYGLFFLGAHFVWAFSLMFLFSGRGYWQELIESIVWAHNKLKVAPATQPRALSIIQGRAVGVTHYLLGGIATTWAFFLARIIAVG.

8 helical membrane-spanning segments follow: residues 70-93 (VFSA…FHGA), 156-179 (LYCT…FHYH), 195-219 (LNHH…HVSL), 291-309 (IAHH…GHMY), 346-369 (WHAQ…HHMY), 385-411 (LSLF…IFMV), 433-455 (AIIS…LYIH), and 531-549 (FLVH…LILL). The [4Fe-4S] cluster site is built by C573 and C582. Transmembrane regions (helical) follow at residues 589 to 610 (HVFL…HFSW) and 664 to 686 (LSAY…MFLF). Chlorophyll a' is bound at residue H675. M683 and Y691 together coordinate chlorophyll a. W692 lines the phylloquinone pocket. Residues 724–744 (AVGVTHYLLGGIATTWAFFLA) traverse the membrane as a helical segment.

This sequence belongs to the PsaA/PsaB family. In terms of assembly, the PsaA/B heterodimer binds the P700 chlorophyll special pair and subsequent electron acceptors. PSI consists of a core antenna complex that captures photons, and an electron transfer chain that converts photonic excitation into a charge separation. The eukaryotic PSI reaction center is composed of at least 11 subunits. Requires P700 is a chlorophyll a/chlorophyll a' dimer, A0 is one or more chlorophyll a, A1 is one or both phylloquinones and FX is a shared 4Fe-4S iron-sulfur center. as cofactor.

It localises to the plastid. It is found in the chloroplast thylakoid membrane. It carries out the reaction reduced [plastocyanin] + hnu + oxidized [2Fe-2S]-[ferredoxin] = oxidized [plastocyanin] + reduced [2Fe-2S]-[ferredoxin]. Its function is as follows. PsaA and PsaB bind P700, the primary electron donor of photosystem I (PSI), as well as the electron acceptors A0, A1 and FX. PSI is a plastocyanin-ferredoxin oxidoreductase, converting photonic excitation into a charge separation, which transfers an electron from the donor P700 chlorophyll pair to the spectroscopically characterized acceptors A0, A1, FX, FA and FB in turn. Oxidized P700 is reduced on the lumenal side of the thylakoid membrane by plastocyanin. This is Photosystem I P700 chlorophyll a apoprotein A1 from Saccharum hybrid (Sugarcane).